We begin with the raw amino-acid sequence, 550 residues long: Glucose-6-phosphate isomerase 2 (550 aa).

The active-site Proton donor is the glutamate 359. Active-site residues include histidine 390 and lysine 514.

It belongs to the GPI family.

The protein resides in the cytoplasm. It catalyses the reaction alpha-D-glucose 6-phosphate = beta-D-fructose 6-phosphate. It functions in the pathway carbohydrate biosynthesis; gluconeogenesis. The protein operates within carbohydrate degradation; glycolysis; D-glyceraldehyde 3-phosphate and glycerone phosphate from D-glucose: step 2/4. Catalyzes the reversible isomerization of glucose-6-phosphate to fructose-6-phosphate. This is Glucose-6-phosphate isomerase 2 from Streptomyces avermitilis (strain ATCC 31267 / DSM 46492 / JCM 5070 / NBRC 14893 / NCIMB 12804 / NRRL 8165 / MA-4680).